A 443-amino-acid polypeptide reads, in one-letter code: Xaa-Pro dipeptidase (443 aa).

Asp246, Asp257, His339, Glu384, and Glu423 together coordinate Mn(2+).

It belongs to the peptidase M24B family. Bacterial-type prolidase subfamily. Requires Mn(2+) as cofactor.

The catalysed reaction is Xaa-L-Pro dipeptide + H2O = an L-alpha-amino acid + L-proline. Functionally, splits dipeptides with a prolyl residue in the C-terminal position. The sequence is that of Xaa-Pro dipeptidase from Escherichia coli O7:K1 (strain IAI39 / ExPEC).